We begin with the raw amino-acid sequence, 210 residues long: Outer-membrane lipoprotein LolB (210 aa).

Positions 1–26 are cleaved as a signal peptide; sequence MSKLKIDTKRRFSLLIALVLIISLSS. Residue C27 is the site of N-palmitoyl cysteine attachment. C27 carries S-diacylglycerol cysteine lipidation.

This sequence belongs to the LolB family. Monomer.

It localises to the cell outer membrane. Plays a critical role in the incorporation of lipoproteins in the outer membrane after they are released by the LolA protein. The chain is Outer-membrane lipoprotein LolB from Francisella tularensis subsp. holarctica (strain FTNF002-00 / FTA).